A 428-amino-acid polypeptide reads, in one-letter code: GTPase Obg (428 aa).

The 158-residue stretch at 1-158 (MFVDQVKIYV…RYIVLELKVL (158 aa)) folds into the Obg domain. The disordered stretch occupies residues 118–143 (KGGRGGRGNTRFATPANPAPQLSENG). The region spanning 159 to 329 (ADVGLVGFPS…LLFEIADRLE (171 aa)) is the OBG-type G domain. GTP contacts are provided by residues 165–172 (GFPSVGKS), 190–194 (FTTLN), 212–215 (DLPG), 282–285 (NKMD), and 310–312 (SAV). Serine 172 and threonine 192 together coordinate Mg(2+). An OCT domain is found at 350-428 (KLEDEEAPFE…LLEFEFEFID (79 aa)).

This sequence belongs to the TRAFAC class OBG-HflX-like GTPase superfamily. OBG GTPase family. Monomer. Mg(2+) is required as a cofactor.

Its subcellular location is the cytoplasm. Its function is as follows. An essential GTPase which binds GTP, GDP and possibly (p)ppGpp with moderate affinity, with high nucleotide exchange rates and a fairly low GTP hydrolysis rate. Plays a role in control of the cell cycle, stress response, ribosome biogenesis and in those bacteria that undergo differentiation, in morphogenesis control. The chain is GTPase Obg from Bacillus licheniformis (strain ATCC 14580 / DSM 13 / JCM 2505 / CCUG 7422 / NBRC 12200 / NCIMB 9375 / NCTC 10341 / NRRL NRS-1264 / Gibson 46).